We begin with the raw amino-acid sequence, 1488 residues long: Phenolphthiocerol/phthiocerol polyketide synthase subunit E (1488 aa).

The 434-residue stretch at 5 to 438 (ENAIAVVGMA…GTNAHVVLEE (434 aa)) folds into the Ketosynthase family 3 (KS3) domain. Catalysis depends on for beta-ketoacyl synthase activity residues C184, H320, and H361. The interval 551-868 (VFLFPGQGAQ…GELWSAGVEV (318 aa)) is acyltransferase. The For malonyltransferase activity role is filled by S641. The region spanning 930–1004 (NGESQTEVTL…SLTAAVDASF (75 aa)) is the Carrier domain. Position 965 is an O-(pantetheine 4'-phosphoryl)serine (S965). NADP(+) is bound at residue 1286 to 1331 (EGVVAVELEGEGRSVLRPDVDLRRTVGWFTTYYPVPLACATGLGAL).

Requires NADP(+) as cofactor. Pantetheine 4'-phosphate is required as a cofactor.

It catalyses the reaction icosanoyl-[(phenol)carboxyphthiodiolenone synthase] + 2 (S)-methylmalonyl-CoA + 3 malonyl-CoA + 5 NADPH + 10 H(+) = C32-carboxyphthiodiolenone-[(phenol)carboxyphthiodiolenone synthase] + 5 CO2 + 5 NADP(+) + 5 CoA + 2 H2O. The catalysed reaction is docosanoyl-[(phenol)carboxyphthiodiolenone synthase] + 2 (S)-methylmalonyl-CoA + 3 malonyl-CoA + 5 NADPH + 10 H(+) = C34-carboxyphthiodiolenone-[(phenol)carboxyphthiodiolenone synthase] + 5 CO2 + 5 NADP(+) + 5 CoA + 2 H2O. It carries out the reaction 17-(4-hydroxyphenyl)heptadecanoyl-[(phenol)carboxyphthiodiolenone synthase] + 2 (S)-methylmalonyl-CoA + 3 malonyl-CoA + 5 NADPH + 10 H(+) = C35-(phenol)carboxyphthiodiolenone-[(phenol)carboxyphthiodiolenone synthase] + 5 CO2 + 5 NADP(+) + 5 CoA + 2 H2O. The enzyme catalyses 19-(4-hydroxyphenyl)nonadecanoyl-[(phenol)carboxyphthiodiolenone synthase] + 2 (S)-methylmalonyl-CoA + 3 malonyl-CoA + 5 NADPH + 10 H(+) = C37-(phenol)carboxyphthiodiolenone-[(phenol)carboxyphthiodiolenone synthase] + 5 CO2 + 5 NADP(+) + 5 CoA + 2 H2O. It functions in the pathway lipid metabolism; fatty acid biosynthesis. Functionally, part of the PpsABCDE complex involved in the biosynthesis of the lipid core common to phthiocerols and phenolphthiocerols by successive additions of malonyl-CoA or methylmalonyl-CoA extender units. PpsA can accept as substrate the activated forms of either icosanoyl (C20), docosanoyl (C22) or lignoceroyl (C24) groups from FadD26, or a (4-hydroxyphenyl)-C17 or (4-hydroxyphenyl)-C19 fatty acyl from FadD29. PpsA initiates the biosynthesis and extends its substrate using a malonyl-CoA extender unit. The PpsB and PpsC proteins add the second and third malonyl-CoA extender units. PpsD adds an (R)-methylmalonyl unit and PpsE adds a second (R)-methylmalonyl unit. The incorporation of the methylmalonyl units results in formation of two branched methyl groups in the elongated product. This is Phenolphthiocerol/phthiocerol polyketide synthase subunit E (ppsE) from Mycobacterium bovis (strain ATCC BAA-935 / AF2122/97).